The primary structure comprises 115 residues: Replication initiation control protein YabA (115 aa).

Zn(2+) contacts are provided by His90, Cys92, Cys106, and Cys109.

This sequence belongs to the YabA family. In terms of assembly, homotetramer. Interacts with both DnaA and DnaN, acting as a bridge between these two proteins. The cofactor is Zn(2+).

It localises to the cytoplasm. It is found in the nucleoid. In terms of biological role, involved in control of chromosome replication initiation. Inhibits the cooperative binding of DnaA to the oriC region, thus negatively regulating initiation of chromosome replication. Inhibits the ability of DnaA-ATP to form a helix on DNA; does not disassemble preformed DnaA-DNA helices. Decreases the residence time of DnaA on the chromosome at its binding sites (oriC, replication forks and promoter-binding sites). Tethers DnaA to the replication machinery via the DNA polymerase beta sliding clamp subunit (dnaN). Associates with oriC and other DnaA targets on the chromosome in a DnaA-dependent manner. In Staphylococcus aureus (strain JH1), this protein is Replication initiation control protein YabA.